Consider the following 194-residue polypeptide: Adenylate kinase isoenzyme 1 (194 aa).

At M1 the chain carries N-acetylmethionine. 18-23 (GSGKGT) lines the ATP pocket. S38 bears the Phosphoserine mark. The interval 38–67 (STGDLLRSEVSSGSARGKKLSEIMEKGQLV) is NMP. AMP-binding positions include T39, R44, 65 to 67 (QLV), 94 to 97 (GYPR), and Q101. An LID region spans residues 131 to 141 (KRGETSGRVDD). R132 serves as a coordination point for ATP. R138 and R149 together coordinate AMP. G177 serves as a coordination point for ATP.

The protein belongs to the adenylate kinase family. AK1 subfamily. As to quaternary structure, monomer. It depends on Mg(2+) as a cofactor.

Its subcellular location is the cytoplasm. The catalysed reaction is a ribonucleoside 5'-phosphate + ATP = a ribonucleoside 5'-diphosphate + ADP. The enzyme catalyses AMP + ATP = 2 ADP. It carries out the reaction dAMP + ATP = dADP + ADP. It catalyses the reaction dATP + AMP = dADP + ADP. The catalysed reaction is dAMP + dATP = 2 dADP. The enzyme catalyses a 2'-deoxyribonucleoside 5'-diphosphate + ATP = a 2'-deoxyribonucleoside 5'-triphosphate + ADP. It carries out the reaction a ribonucleoside 5'-diphosphate + ATP = a ribonucleoside 5'-triphosphate + ADP. It catalyses the reaction CDP + GTP = CTP + GDP. The catalysed reaction is GDP + ATP = GTP + ADP. The enzyme catalyses UDP + ATP = UTP + ADP. It carries out the reaction GTP + UDP = UTP + GDP. It catalyses the reaction dTDP + GTP = dTTP + GDP. The catalysed reaction is dCDP + GTP = dCTP + GDP. The enzyme catalyses dGDP + ATP = dGTP + ADP. It carries out the reaction dADP + GTP = dATP + GDP. It catalyses the reaction thiamine diphosphate + ADP = thiamine triphosphate + AMP. Its function is as follows. Catalyzes the reversible transfer of the terminal phosphate group between ATP and AMP. Also displays broad nucleoside diphosphate kinase activity. Plays an important role in cellular energy homeostasis and in adenine nucleotide metabolism. Also catalyzes at a very low rate the synthesis of thiamine triphosphate (ThTP) from thiamine diphosphate (ThDP) and ADP. The chain is Adenylate kinase isoenzyme 1 from Homo sapiens (Human).